The following is a 320-amino-acid chain: Polynucleotide 5'-triphosphatase CTL1 (320 aa).

A compositionally biased stretch (polar residues) spans 1–12; the sequence is MSDQPETPSNSR. Residues 1–23 are disordered; the sequence is MSDQPETPSNSRNSHENVGAKKA. Over residues 13-23 the composition is skewed to basic and acidic residues; sequence NSHENVGAKKA.

The protein belongs to the fungal TPase family. Requires Mg(2+) as cofactor. The cofactor is Mn(2+).

The protein localises to the cytoplasm. It is found in the nucleus. It carries out the reaction a 5'-end triphospho-ribonucleoside in mRNA + H2O = a 5'-end diphospho-ribonucleoside in mRNA + phosphate + H(+). Its function is as follows. Probably involved in an RNA processing event other than mRNA capping. Releases gamma-phosphate from the 5'-end of RNA to produce a diphosphate terminus. The polypeptide is Polynucleotide 5'-triphosphatase CTL1 (Saccharomyces cerevisiae (strain ATCC 204508 / S288c) (Baker's yeast)).